A 296-amino-acid chain; its full sequence is tRNA dimethylallyltransferase (296 aa).

9–16 contributes to the ATP binding site; it reads GTTASGKS. A substrate-binding site is contributed by 11 to 16; sequence TASGKS. An interaction with substrate tRNA region spans residues 34-37; it reads DSLA.

It belongs to the IPP transferase family. Monomer. The cofactor is Mg(2+).

It carries out the reaction adenosine(37) in tRNA + dimethylallyl diphosphate = N(6)-dimethylallyladenosine(37) in tRNA + diphosphate. Its function is as follows. Catalyzes the transfer of a dimethylallyl group onto the adenine at position 37 in tRNAs that read codons beginning with uridine, leading to the formation of N6-(dimethylallyl)adenosine (i(6)A). The chain is tRNA dimethylallyltransferase from Campylobacter curvus (strain 525.92).